Here is a 119-residue protein sequence, read N- to C-terminus: Dihydroneopterin aldolase (119 aa).

Substrate contacts are provided by residues Glu21, Tyr53, and 72–73; that span reads IE. Lys99 acts as the Proton donor/acceptor in catalysis.

This sequence belongs to the DHNA family.

The catalysed reaction is 7,8-dihydroneopterin = 6-hydroxymethyl-7,8-dihydropterin + glycolaldehyde. The protein operates within cofactor biosynthesis; tetrahydrofolate biosynthesis; 2-amino-4-hydroxy-6-hydroxymethyl-7,8-dihydropteridine diphosphate from 7,8-dihydroneopterin triphosphate: step 3/4. Catalyzes the conversion of 7,8-dihydroneopterin to 6-hydroxymethyl-7,8-dihydropterin. In Streptococcus pyogenes serotype M1, this protein is Dihydroneopterin aldolase (folB).